The following is a 194-amino-acid chain: MSDVDADEARKMAERERKKEEVRKRLEEASRMKKAKKGFLTPERKKKLRKLLMMKAAEDLKQQQMLKEQERQRILQERIIPLPDLDNEDDLEAVYDEIRERLIDLESENYDVSYIVRQKDFEINELTIAVNDLRGKFVKPTLKKVSKTEGKFDKLKKKEATKVDFRAQLKVVDKNEFALDEEDTEKKEKAAWAK.

The disordered stretch occupies residues methionine 1–glutamate 27. Over residues aspartate 7 to glutamate 27 the composition is skewed to basic and acidic residues.

It belongs to the troponin I family. Expression is detected only in pharyngeal muscle cells from embryos to adults.

Its function is as follows. Troponin I is the inhibitory subunit of troponin, the thin filament regulatory complex which confers calcium-sensitivity to muscle actomyosin ATPase activity. This chain is Troponin I 4 (tni-4), found in Caenorhabditis elegans.